Consider the following 458-residue polypeptide: Monomethylamine methyltransferase MtmB1 (458 aa).

Residue Pyl-202 is a non-standard amino acid, pyrrolysine.

The protein belongs to the monomethylamine methyltransferase family. As to quaternary structure, dimer of homotrimers. Can form a complex with MtmC (MtmC1 or MtmC2).

It carries out the reaction Co(I)-[methylamine-specific corrinoid protein] + methylamine + H(+) = methyl-Co(III)-[methylamine-specific corrinoid protein] + NH4(+). Its pathway is one-carbon metabolism; methanogenesis from methylamine. Catalyzes the transfer of the methyl group from monomethylamine to the corrinoid cofactor of MtmC (MtmC1 or MtmC2). The protein is Monomethylamine methyltransferase MtmB1 (mtmB1) of Methanosarcina barkeri.